A 648-amino-acid polypeptide reads, in one-letter code: MRTSSESHSRSDAFNGKNDASQVTVDSDSASKDHHDHDHHHKDTSINERQSQHVHQQAGVSKVEAFNKALYQSGPSGRLLLYVLVASLALTMFAYALDQGITYQFNAIASSDFSQHASLGAVNTASSIIRAISKPFLGKLSDITSRPTTYVVVLVVYAVGFAVAASSQGLAAYIVGASFTAFGKSGLDLLSDIIVGDLTPLEWRAFWSGMLATPFLITTFINGFISDAFVPNNWRWGLGMFAIMMPVLLTPAIWTLYGMQLKAAKMGMVSMGDSGLARKDGVKVQGMQQYLPMARSIAVEMDLIGLLLLGLAFSLILLALNLAPASNGGWSNPSMIAMLVIGFVILGLFIAYEALLAPVPITPKRILTNKAFLCALTVDVFNQMASATRNNYWSSYIYIIKPWSNYVWTIFIGTTTLTLCTMSPIGGLIHRATHRYKTLMVIGAIIKLIGYGVGLDGNSRSTLSTARLAVSQVMLGMGAWTVIGARVGSQASVPHQDLSVVISVMSLWSTMASSIGSTIAATIWQDRMLNYMREECPPSTPEATLKKIYGSIKTLKTKYDWEDPVRMGAIRAYTRTNGIILAVSLVLAAVPVVFSCLMPNYYLGKQQNAVTNTDVLGERTEVPRRVEEPTNGKPSLWQRVKRGYYKET.

Composition is skewed to basic and acidic residues over residues 1-11 (MRTSSESHSRS) and 29-46 (SASK…DTSI). The interval 1 to 58 (MRTSSESHSRSDAFNGKNDASQVTVDSDSASKDHHDHDHHHKDTSINERQSQHVHQQA) is disordered. A compositionally biased stretch (polar residues) spans 47–58 (NERQSQHVHQQA). 11 consecutive transmembrane segments (helical) span residues 79–99 (LLLY…ALDQ), 151–171 (VVVL…QGLA), 205–225 (AFWS…NGFI), 236–256 (WGLG…IWTL), 303–323 (LIGL…LNLA), 336–356 (IAML…EALL), 409–429 (TIFI…GGLI), 438–458 (TLMV…LDGN), 468–488 (LAVS…ARVG), 500–520 (VVIS…STIA), and 578–598 (GIIL…SCLM).

The protein belongs to the major facilitator superfamily.

Its subcellular location is the cell membrane. Siderophore transporter; part of the gene cluster 14 that mediates the biosynthesis of a ferrichrome A-like siderophors which may contribute to organismal virulence. The sequence is that of Siderophore transporter MYCGRDRAFT_70577 from Zymoseptoria tritici (strain CBS 115943 / IPO323) (Speckled leaf blotch fungus).